The chain runs to 473 residues: MKRASSGGSRLLAWVLWLQAWRVATPCPGACVCYNEPKVTTSCPQQGLQAVPTGIPASSQRIFLHGNRISYVPAASFQSCRNLTILWLHSNALAGIDAAAFTGLTLLEQLDLSDNAQLRVVDPTTFRGLGHLHTLHLDRCGLQELGPGLFRGLAALQYLYLQDNNLQALPDNTFRDLGNLTHLFLHGNRIPSVPEHAFRGLHSLDRLLLHQNHVARVHPHAFRDLGRLMTLYLFANNLSMLPAEVLVPLRSLQYLRLNDNPWVCDCRARPLWAWLQKFRGSSSEVPCNLPQRLAGRDLKRLAASDLEGCAVASGPFRPFQTNQLTDEELLGLPKCCQPDAADKASVLEPGRPASAGNALKGRVPPGDTPPGNGSGPRHINDSPFGTLPGSAEPPLTALRPGGSEPPGLPTTGPRRRPGCSRKNRTRSHCRLGQAGSGSSGTGDAEGSGALPALACSLAPLGLALVLWTVLGPC.

An N-terminal signal peptide occupies residues 1–26; that stretch reads MKRASSGGSRLLAWVLWLQAWRVATP. Intrachain disulfides connect Cys-27–Cys-33 and Cys-31–Cys-43. Residues 27-57 enclose the LRRNT domain; sequence CPGACVCYNEPKVTTSCPQQGLQAVPTGIPA. 9 LRR repeats span residues 56 to 79, 80 to 103, 105 to 128, 129 to 152, 153 to 176, 178 to 200, 202 to 224, 225 to 248, and 250 to 273; these read PASS…SFQS, CRNL…AFTG, TLLE…TFRG, LGHL…LFRG, LAAL…TFRD, GNLT…AFRG, HSLD…AFRD, LGRL…VLVP, and RSLQ…PLWA. N-linked (GlcNAc...) asparagine glycosylation occurs at Asn-82. An LRRCT domain is found at 260-310; sequence NPWVCDCRARPLWAWLQKFRGSSSEVPCNLPQRLAGRDLKRLAASDLEGCA. 3 disulfides stabilise this stretch: Cys-264–Cys-287, Cys-266–Cys-335, and Cys-309–Cys-336. Residues 346–446 are disordered; that stretch reads VLEPGRPASA…GSSGTGDAEG (101 aa). Residue Asn-372 is glycosylated (N-linked (GlcNAc...) asparagine). Basic residues predominate over residues 413-429; it reads PRRRPGCSRKNRTRSHC. Over residues 434-445 the composition is skewed to gly residues; sequence AGSGSSGTGDAE. The GPI-anchor amidated serine moiety is linked to residue Ser-447. The propeptide at 448 to 473 is removed in mature form; the sequence is GALPALACSLAPLGLALVLWTVLGPC.

It belongs to the Nogo receptor family. As to quaternary structure, homodimer. Interacts with MAG. Interacts with RTN4 and OMG. Interacts with LINGO1 and NGFR. Interacts with KIAA0319L. Interacts with OLFM1; this inhibits interaction with LINGO1 and NGFR. N-glycosylated. O-glycosylated. Contains terminal sialic acid groups on its glycan chains. Detected in embryonic cerebellum, in spinal cord motor neurons and in dorsal root ganglia. Detected in adult brain, in neocortex, hippocampus, striatum, thalamus and dorsal root ganglion neurons (at protein level).

The protein localises to the cell membrane. It is found in the membrane raft. Its subcellular location is the cell projection. The protein resides in the dendrite. It localises to the perikaryon. The protein localises to the axon. Functionally, receptor for RTN4, OMG and MAG. Functions as a receptor for the sialylated gangliosides GT1b and GM1. Besides, functions as a receptor for chondroitin sulfate proteoglycans. Can also bind heparin. Intracellular signaling cascades are triggered via the coreceptor NGFR. Signaling mediates activation of Rho and downstream reorganization of the actin cytoskeleton. Mediates axonal growth inhibition. May play a role in regulating axon regeneration and neuronal plasticity in the adult central nervous system. Plays a role in postnatal brain development. Required for normal axon migration across the brain midline and normal formation of the corpus callosum. Protects motoneurons against apoptosis; protection against apoptosis is probably mediated via interaction with MAG. Acts in conjunction with RTN4 and LINGO1 in regulating neuronal precursor cell motility during cortical development. Like other family members, plays a role in restricting the number dendritic spines and the number of synapses that are formed during brain development. This is Reticulon-4 receptor (Rtn4r) from Rattus norvegicus (Rat).